The primary structure comprises 333 residues: Leucine carboxyl methyltransferase 1 (333 aa).

Residues Lys42, Arg82, Gly107, Asp131, 181–182, and Glu208 each bind S-adenosyl-L-methionine; that span reads DL.

Belongs to the methyltransferase superfamily. LCMT family.

It catalyses the reaction [phosphatase 2A protein]-C-terminal L-leucine + S-adenosyl-L-methionine = [phosphatase 2A protein]-C-terminal L-leucine methyl ester + S-adenosyl-L-homocysteine. Methylates the carboxyl group of the C-terminal leucine residue of protein phosphatase 2A catalytic subunits to form alpha-leucine ester residues. In Caenorhabditis elegans, this protein is Leucine carboxyl methyltransferase 1.